A 721-amino-acid polypeptide reads, in one-letter code: Protein quick-to-court (721 aa).

5 disordered regions span residues 1–42, 143–210, 360–379, 393–428, and 441–471; these read MMTS…RIPH, VGNS…ASVA, SSPE…EAEL, DEGN…MQSS, and SSVH…CGAG. Basic and acidic residues predominate over residues 17 to 31; the sequence is QVQREKDNDSAEDSH. Positions 161–201 are enriched in low complexity; that stretch reads NGGSDISSSGTSSSSSNNKESSPRTTRTPRTPQTPQTPQTP. Basic and acidic residues predominate over residues 362–379; it reads PEERSASSDAVTVREAEL. Residues 406–420 are compositionally biased toward low complexity; that stretch reads RQQQQQANHSLQAMQ. The span at 441-454 shows a compositional bias: polar residues; that stretch reads SSVHSKDSQTQSEA. Residues 511–569 adopt a coiled-coil conformation; it reads KRSHNDKVEALLQKLAECNTRYSDMVPDYEQAKQRIRELEKQLEDLQRKLIEHEEKQNK. Positions 668-716 constitute a GRIP domain; the sequence is HVDPEVTLQFLKSAIFYFLTDKENSQGHLQAIESILEFTDAEKQKISAA.

As to expression, expressed in the third antennal segment and the maxillary palp, with increased expression near the cuticle of both olfactory organs. Also detected in the second antenna segment. In the brain, expressed in the central nervous system, with high levels of expression in the visual system including the retina and optic lobe, and uniform expression in the cortex. Detected in the thorax and abdomen, with increased expression in the ventral ganglion. In males, detected in the reproductive tract including the ejaculatory bulb and testis.

In adult males, modulates sexual behavior by playing a role in sex discrimination and maintaining normal levels of sexual activity towards both males and females. This is Protein quick-to-court from Drosophila melanogaster (Fruit fly).